The primary structure comprises 148 residues: Multiprotein-bridging factor 1 (148 aa).

The tract at residues 1 to 97 is disordered; the sequence is MSDWDTVTKI…AKGWAQKDLS (97 aa). Residues 82 to 136 enclose the HTH cro/C1-type domain; that stretch reads IQKGRQAKGWAQKDLSQRINEKPQVVNDYESGRAIPNQQVLSKMERALGIKLRGQ. The segment at residues 93–112 is a DNA-binding region (H-T-H motif); sequence QKDLSQRINEKPQVVNDYES.

Belongs to the MBF1 family.

Functionally, transcriptional coactivator that stimulates GCN4-dependent transcriptional activity by bridging the DNA-binding region of GCN4 and TBP (SPT15), thereby recruiting TBP to GCN4-bound promoters. Involved in induction of the ribosome quality control (RQC) pathway; a pathway that degrades nascent peptide chains during problematic translation. Required to prevent stalled ribosomes from frameshifting. The polypeptide is Multiprotein-bridging factor 1 (mbf1) (Schizosaccharomyces pombe (strain 972 / ATCC 24843) (Fission yeast)).